A 159-amino-acid chain; its full sequence is Transcription elongation factor GreA (159 aa).

Residues 2–77 (EENKEFLLTQ…LENMVRKAVI (76 aa)) adopt a coiled-coil conformation.

This sequence belongs to the GreA/GreB family.

Its function is as follows. Necessary for efficient RNA polymerase transcription elongation past template-encoded arresting sites. The arresting sites in DNA have the property of trapping a certain fraction of elongating RNA polymerases that pass through, resulting in locked ternary complexes. Cleavage of the nascent transcript by cleavage factors such as GreA or GreB allows the resumption of elongation from the new 3'terminus. GreA releases sequences of 2 to 3 nucleotides. This Clostridioides difficile (strain 630) (Peptoclostridium difficile) protein is Transcription elongation factor GreA.